The following is an 85-amino-acid chain: UPF0297 protein CLL_A1175 (85 aa).

The protein belongs to the UPF0297 family.

The protein is UPF0297 protein CLL_A1175 of Clostridium botulinum (strain Eklund 17B / Type B).